The sequence spans 278 residues: Putative ABC transporter ATP-binding protein MJ1572 (278 aa).

The ABC transporter domain occupies Tyr-5 to Glu-242. Gly-38 to Thr-45 provides a ligand contact to ATP.

This sequence belongs to the ABC transporter superfamily.

It is found in the cell membrane. Its function is as follows. Probably part of an ABC transporter complex. Responsible for energy coupling to the transport system. This is Putative ABC transporter ATP-binding protein MJ1572 from Methanocaldococcus jannaschii (strain ATCC 43067 / DSM 2661 / JAL-1 / JCM 10045 / NBRC 100440) (Methanococcus jannaschii).